Reading from the N-terminus, the 544-residue chain is uncharacterized protein (544 aa).

This is an uncharacterized protein from Acanthamoeba polyphaga mimivirus (APMV).